The chain runs to 415 residues: PRKCA-binding protein (415 aa).

The PDZ domain maps to 22-105 (KVTLQKDAQN…EVTIHYNKLQ (84 aa)). Zn(2+) is bound by residues Cys-44 and Cys-46. Position 82 is a phosphothreonine (Thr-82). The AH domain occupies 144 to 357 (LCNDGLVKRL…CYAVLRDADV (214 aa)). A disordered region spans residues 376–415 (EEFTDGEEEEEEEDTAAGEPSRDTRGAAGPLDKGGSWCDS). The span at 377 to 391 (EFTDGEEEEEEEDTA) shows a compositional bias: acidic residues. Cys-413 carries the S-palmitoyl cysteine; by DHHC8 lipid modification.

Monomer and homodimer. Interacts with CXADR. Interacts presynaptically with the glutamate receptors GRIA2, GRIA3, GRIK3, isoform 3 of GRIA4, isoform A of GRM4, GRM7 and GRM8; with NAPA and NAPB; and with BTG2. The interaction with NAPA and NAPB disrupts the interaction with GRIA2, conducting to the internalization of GRIA2. Interacts with PRKCA; with the amine transporters SLC6A2 and SLC6A3; with the channels ASIC1 and ASIC2; with the GTP-binding proteins ARF1 and ARF3; with the ephrin receptor tyrosine kinases EPHA7, EPHB1 and EPHB2; with ERBB2 and through its PDZ domain with the C-terminal tail of PRLHR. Interacts with UNC5A. Interacts (via AH domain) with NCS1/FREQ; in a calcium-dependent manner. Interacts with F-actin and associates with the ARP2/3 complex. Interacts (via PDZ domain) with ARF1 (activated); the interaction blocks Arp2/3 complex inhibition. Interacts with SORCS3. In terms of processing, phosphorylation at Thr-82 appears to inhibit the interaction with AMPA receptors. Post-translationally, palmitoylation on Cys-413 is essential for long-term synaptic depression (LTD).

Its subcellular location is the cytoplasm. It localises to the perinuclear region. The protein localises to the membrane. The protein resides in the postsynaptic density. It is found in the synapse. Its subcellular location is the synaptosome. It localises to the cytoskeleton. Functionally, probable adapter protein that bind to and organize the subcellular localization of a variety of membrane proteins containing some PDZ recognition sequence. Involved in the clustering of various receptors, possibly by acting at the receptor internalization level. Plays a role in synaptic plasticity by regulating the trafficking and internalization of AMPA receptors. May be regulated upon PRKCA activation. May regulate ASIC1/ASIC3 channel. Regulates actin polymerization by inhibiting the actin-nucleating activity of the Arp2/3 complex; the function is competitive with nucleation promoting factors and is linked to neuronal morphology regulation and AMPA receptor (AMPAR) endocytosis. Via interaction with the Arp2/3 complex involved in regulation of synaptic plasicity of excitatory synapses and required for spine shrinkage during long-term depression (LTD). Involved in regulation of astrocyte morphology, antagonistic to Arp2/3 complex activator WASL/N-WASP function. The polypeptide is PRKCA-binding protein (PICK1) (Macaca fascicularis (Crab-eating macaque)).